A 461-amino-acid chain; its full sequence is Protein KlcB (461 aa).

Disordered regions lie at residues 84–107 (PEATTPAARRRTKARKSKPQTEDK) and 349–379 (RAKAQEPAGQRREPVTPAKPEPEPAKDEDAP). Positions 91-101 (ARRRTKARKSK) are enriched in basic residues. A compositionally biased stretch (basic and acidic residues) spans 357 to 377 (GQRREPVTPAKPEPEPAKDED).

The sequence is that of Protein KlcB (klcB) from Escherichia coli.